Here is a 289-residue protein sequence, read N- to C-terminus: Polyamine aminopropyltransferase (289 aa).

A PABS domain is found at 5–245 (PGPITLIEPL…YAVNFILGSL (241 aa)). Glutamine 36 lines the S-methyl-5'-thioadenosine pocket. Residues histidine 67 and glutamate 91 each contribute to the spermidine site. Residues aspartate 111 and 143–144 (DG) contribute to the S-methyl-5'-thioadenosine site. Aspartate 164 functions as the Proton acceptor in the catalytic mechanism.

This sequence belongs to the spermidine/spermine synthase family. Homodimer or homotetramer.

The protein resides in the cytoplasm. The catalysed reaction is S-adenosyl 3-(methylsulfanyl)propylamine + putrescine = S-methyl-5'-thioadenosine + spermidine + H(+). It functions in the pathway amine and polyamine biosynthesis; spermidine biosynthesis; spermidine from putrescine: step 1/1. Functionally, catalyzes the irreversible transfer of a propylamine group from the amino donor S-adenosylmethioninamine (decarboxy-AdoMet) to putrescine (1,4-diaminobutane) to yield spermidine. The chain is Polyamine aminopropyltransferase from Pyrobaculum calidifontis (strain DSM 21063 / JCM 11548 / VA1).